A 112-amino-acid polypeptide reads, in one-letter code: MSMKYLAAYALASLNKPTPGAADVEAICKACGIEVESDALSFVMESIAGRSVATLVAEGAAKMSAVAVSAAPAAGDAAAPAAAAGGAAAPAAADAKKEEEEEDDDMGFGLFD.

The interval 89–112 (APAAADAKKEEEEEDDDMGFGLFD) is disordered.

Belongs to the eukaryotic ribosomal protein P1/P2 family. In terms of assembly, P1 and P2 exist as dimers at the large ribosomal subunit. Post-translationally, phosphorylated.

Plays an important role in the elongation step of protein synthesis. The polypeptide is Large ribosomal subunit protein P2-B (Trypanosoma cruzi).